Consider the following 332-residue polypeptide: L-lactate dehydrogenase A chain (332 aa).

NAD(+) contacts are provided by residues 29 to 57 and arginine 99; that span reads GAVG…VEDK. Substrate is bound by residues arginine 106, asparagine 138, and arginine 169. Asparagine 138 lines the NAD(+) pocket. Residue histidine 193 is the Proton acceptor of the active site. Threonine 248 contributes to the substrate binding site.

It belongs to the LDH/MDH superfamily. LDH family. As to quaternary structure, homotetramer.

The protein resides in the cytoplasm. It catalyses the reaction (S)-lactate + NAD(+) = pyruvate + NADH + H(+). The protein operates within fermentation; pyruvate fermentation to lactate; (S)-lactate from pyruvate: step 1/1. Functionally, interconverts simultaneously and stereospecifically pyruvate and lactate with concomitant interconversion of NADH and NAD(+). This Columba livia (Rock dove) protein is L-lactate dehydrogenase A chain (LDHA).